The following is a 487-amino-acid chain: Variant surface glycoprotein WRATAT B (487 aa).

The first 19 residues, 1–19, serve as a signal peptide directing secretion; sequence MWIILALLTLAGSRVAHGA. N-linked (GlcNAc...) asparagine glycans are attached at residues N71, N84, N418, and N465. The tract at residues 443–468 is disordered; sequence KPKAGTEAATTGPGERDAGATANTTG. S470 carries GPI-anchor amidated serine lipidation. A propeptide spans 471-487 (removed in mature form); it reads NSFVIKTSPLLFAFLLF.

It is found in the cell membrane. In terms of biological role, VSG forms a coat on the surface of the parasite. The trypanosome evades the immune response of the host by expressing a series of antigenically distinct VSGs from an estimated 1000 VSG genes. This Trypanosoma brucei rhodesiense protein is Variant surface glycoprotein WRATAT B.